The following is a 351-amino-acid chain: Farnesyl pyrophosphate synthase (351 aa).

Isopentenyl diphosphate contacts are provided by K51, R54, and Q92. D99 and D103 together coordinate Mg(2+). R108 is a dimethylallyl diphosphate binding site. An isopentenyl diphosphate-binding site is contributed by R109. Dimethylallyl diphosphate is bound by residues K196, T197, Q236, K253, and K262.

The protein belongs to the FPP/GGPP synthase family. It depends on Mg(2+) as a cofactor.

The enzyme catalyses isopentenyl diphosphate + dimethylallyl diphosphate = (2E)-geranyl diphosphate + diphosphate. It carries out the reaction isopentenyl diphosphate + (2E)-geranyl diphosphate = (2E,6E)-farnesyl diphosphate + diphosphate. It participates in isoprenoid biosynthesis; farnesyl diphosphate biosynthesis; farnesyl diphosphate from geranyl diphosphate and isopentenyl diphosphate: step 1/1. Its pathway is isoprenoid biosynthesis; geranyl diphosphate biosynthesis; geranyl diphosphate from dimethylallyl diphosphate and isopentenyl diphosphate: step 1/1. Functionally, farnesyl pyrophosphate synthase; part of the second module of ergosterol biosynthesis pathway that includes the middle steps of the pathway. ERG20 catalyzes the sequential condensation of isopentenyl pyrophosphate with dimethylallyl pyrophosphate, and then with the resultant geranylpyrophosphate to the ultimate product farnesyl pyrophosphate. The second module is carried out in the vacuole and involves the formation of farnesyl diphosphate, which is also an important intermediate in the biosynthesis of ubiquinone, dolichol, heme and prenylated proteins. Activity by the mevalonate kinase ERG12 first converts mevalonate into 5-phosphomevalonate. 5-phosphomevalonate is then further converted to 5-diphosphomevalonate by the phosphomevalonate kinase ERG8. The diphosphomevalonate decarboxylase MVD then produces isopentenyl diphosphate. The isopentenyl-diphosphate delta-isomerase IDI1 then catalyzes the 1,3-allylic rearrangement of the homoallylic substrate isopentenyl (IPP) to its highly electrophilic allylic isomer, dimethylallyl diphosphate (DMAPP). Finally the farnesyl diphosphate synthase ERG20 catalyzes the sequential condensation of isopentenyl pyrophosphate with dimethylallyl pyrophosphate, and then with the resultant geranylpyrophosphate to the ultimate product farnesyl pyrophosphate. The sequence is that of Farnesyl pyrophosphate synthase from Candida albicans (strain SC5314 / ATCC MYA-2876) (Yeast).